Reading from the N-terminus, the 172-residue chain is Thioredoxin M-type, chloroplastic (172 aa).

A chloroplast-targeting transit peptide spans methionine 1–leucine 60. The region spanning histidine 61–isoleucine 172 is the Thioredoxin domain. Catalysis depends on nucleophile residues cysteine 97 and cysteine 100. Residues cysteine 97 and cysteine 100 are joined by a disulfide bond.

It belongs to the thioredoxin family. Plant M-type subfamily. As to quaternary structure, forms a complex with heterodimeric ferredoxin-thioredoxin reductase (FTR) and ferredoxin.

It localises to the plastid. The protein localises to the chloroplast. In terms of biological role, participates in various redox reactions through the reversible oxidation of the active center dithiol to a disulfide. The M form is known to activate NADP-malate dehydrogenase. In Pisum sativum (Garden pea), this protein is Thioredoxin M-type, chloroplastic.